A 365-amino-acid chain; its full sequence is 3-isopropylmalate dehydrogenase (365 aa).

NAD(+) is bound at residue 80–91 (GPKWGTGEVRPE). Substrate contacts are provided by arginine 98, arginine 108, arginine 137, and aspartate 226. Mg(2+) contacts are provided by aspartate 226, aspartate 251, and aspartate 255. NAD(+) is bound at residue 290-301 (GSAPDLPKNKVN).

It belongs to the isocitrate and isopropylmalate dehydrogenases family. Homodimer. Requires Mg(2+) as cofactor. It depends on Mn(2+) as a cofactor.

The protein resides in the cytoplasm. The enzyme catalyses (2R,3S)-3-isopropylmalate + NAD(+) = 4-methyl-2-oxopentanoate + CO2 + NADH. The protein operates within amino-acid biosynthesis; L-leucine biosynthesis; L-leucine from 3-methyl-2-oxobutanoate: step 3/4. In terms of biological role, catalyzes the oxidation of 3-carboxy-2-hydroxy-4-methylpentanoate (3-isopropylmalate) to 3-carboxy-4-methyl-2-oxopentanoate. The product decarboxylates to 4-methyl-2 oxopentanoate. This chain is 3-isopropylmalate dehydrogenase (LEU2), found in Candida boidinii (Yeast).